A 103-amino-acid chain; its full sequence is Histone H4 (103 aa).

Residues 1-14 (MSGRGKGGKGLGKG) are compositionally biased toward gly residues. The segment at 1 to 20 (MSGRGKGGKGLGKGGAKRHR) is disordered. Position 6 is an N6-acetyl-N6-methyllysine; alternate (lysine 6). Residues lysine 6, lysine 9, and lysine 13 each carry the N6-methyllysine; alternate modification. Lysine 13 bears the N6-acetyl-N6-methyllysine; alternate mark. A DNA-binding region spans residues 17 to 21 (KRHRK). Lysine 92 carries the N6-glutaryllysine modification.

It belongs to the histone H4 family. As to quaternary structure, the nucleosome is a histone octamer containing two molecules each of H2A, H2B, H3 and H4 assembled in one H3-H4 heterotetramer and two H2A-H2B heterodimers. The octamer wraps approximately 147 bp of DNA. In terms of processing, glutarylation at Lys-92 (H4K91glu) destabilizes nucleosomes by promoting dissociation of the H2A-H2B dimers from nucleosomes.

The protein localises to the nucleus. It localises to the chromosome. In terms of biological role, core component of nucleosome. Nucleosomes wrap and compact DNA into chromatin, limiting DNA accessibility to the cellular machineries which require DNA as a template. Histones thereby play a central role in transcription regulation, DNA repair, DNA replication and chromosomal stability. DNA accessibility is regulated via a complex set of post-translational modifications of histones, also called histone code, and nucleosome remodeling. The polypeptide is Histone H4 (HHF1) (Mycosarcoma maydis (Corn smut fungus)).